The following is a 329-amino-acid chain: Flotillin-like protein FloA (329 aa).

The next 2 helical transmembrane spans lie at 6–26 and 27–47; these read FIVI…FVPI and GLWI…LVGM.

The protein belongs to the flotillin-like FloA family. In terms of assembly, homooligomerizes.

It is found in the cell membrane. The protein resides in the membrane raft. In terms of biological role, found in functional membrane microdomains (FMM) that may be equivalent to eukaryotic membrane rafts. FMMs are highly dynamic and increase in number as cells age. Flotillins are thought to be important factors in membrane fluidity. In Staphylococcus aureus (strain JH1), this protein is Flotillin-like protein FloA.